Here is a 392-residue protein sequence, read N- to C-terminus: Integrin-linked kinase-associated serine/threonine phosphatase 2C (392 aa).

Methionine 1 carries the post-translational modification N-acetylmethionine. The segment at 1-91 (MDLFGDLPEP…PEEEKNGGEE (91 aa)) is disordered. The segment covering 31–40 (DLPPTSSTDS) has biased composition (low complexity). Positions 59-70 (SGSLATSGSQVV) are enriched in polar residues. Over residues 72 to 91 (NEGKGAKRKAPEEEKNGGEE) the composition is skewed to basic and acidic residues. The region spanning 108 to 390 (KGYVAERKGE…DNVTVMVVRI (283 aa)) is the PPM-type phosphatase domain. Aspartate 152 and glycine 153 together coordinate Mn(2+). The residue at position 210 (lysine 210) is an N6-acetyllysine. Positions 326 and 381 each coordinate Mn(2+).

The protein belongs to the PP2C family. As to quaternary structure, interacts with ILK. It depends on Mg(2+) as a cofactor. Mn(2+) serves as cofactor. Widely expressed. Highest expression observed in kidney, liver and muscle.

The protein localises to the cytoplasm. The catalysed reaction is O-phospho-L-seryl-[protein] + H2O = L-seryl-[protein] + phosphate. It carries out the reaction O-phospho-L-threonyl-[protein] + H2O = L-threonyl-[protein] + phosphate. In terms of biological role, protein phosphatase that may play a role in regulation of cell cycle progression via dephosphorylation of its substrates whose appropriate phosphorylation states might be crucial for cell proliferation. Selectively associates with integrin linked kinase (ILK), to modulate cell adhesion and growth factor signaling. Inhibits the ILK-GSK3B signaling axis and may play an important role in inhibiting oncogenic transformation. The sequence is that of Integrin-linked kinase-associated serine/threonine phosphatase 2C (Ilkap) from Rattus norvegicus (Rat).